Here is a 348-residue protein sequence, read N- to C-terminus: Glucose 1-dehydrogenase 2 (348 aa).

Cysteine 39 is a Zn(2+) binding site. Threonine 41 is a binding site for substrate. Residues histidine 64 and glutamate 65 each coordinate Zn(2+). The substrate site is built by glutamate 110 and glutamate 146. Glutamate 146 lines the Zn(2+) pocket. Residues 178–181 (AGPV), 260–262 (LGV), and 289–291 (SVN) contribute to the NADP(+) site. Asparagine 291 serves as a coordination point for substrate.

The protein belongs to the zinc-containing alcohol dehydrogenase family. Glucose 1-dehydrogenase subfamily. Requires Zn(2+) as cofactor.

The enzyme catalyses D-glucose + NAD(+) = D-glucono-1,5-lactone + NADH + H(+). It catalyses the reaction D-glucose + NADP(+) = D-glucono-1,5-lactone + NADPH + H(+). Its function is as follows. Catalyzes the NAD(P)(+)-dependent oxidation of D-glucose to D-gluconate via gluconolactone. Can utilize both NAD(+) and NADP(+) as electron acceptor. Is involved in the degradation of glucose through a non-phosphorylative variant of the Entner-Doudoroff pathway. The polypeptide is Glucose 1-dehydrogenase 2 (Vulcanisaeta moutnovskia (strain 768-28)).